Consider the following 418-residue polypeptide: Serpin A3-8 (418 aa).

The first 25 residues, 1–25 (MRAERMSPLLALGLLVSGLCSRVHC), serve as a signal peptide directing secretion. Residues N103, N183, N233, and N268 are each glycosylated (N-linked (GlcNAc...) asparagine).

It belongs to the serpin family. As to quaternary structure, homodimer.

The protein localises to the cytoplasmic vesicle. The protein resides in the secretory vesicle. It is found in the chromaffin granule. Its subcellular location is the secreted. Serine protease inhibitor. The chain is Serpin A3-8 from Bos taurus (Bovine).